Reading from the N-terminus, the 419-residue chain is D-amino acid dehydrogenase (419 aa).

3 to 17 is an FAD binding site; that stretch reads VLVLGAGVAGVSSVW.

The protein belongs to the DadA oxidoreductase family. FAD is required as a cofactor.

It catalyses the reaction a D-alpha-amino acid + A + H2O = a 2-oxocarboxylate + AH2 + NH4(+). It participates in amino-acid degradation; D-alanine degradation; NH(3) and pyruvate from D-alanine: step 1/1. Functionally, oxidative deamination of D-amino acids. The protein is D-amino acid dehydrogenase of Neisseria gonorrhoeae (strain ATCC 700825 / FA 1090).